A 124-amino-acid polypeptide reads, in one-letter code: Large ribosomal subunit protein bL19 (124 aa).

Belongs to the bacterial ribosomal protein bL19 family.

Functionally, this protein is located at the 30S-50S ribosomal subunit interface and may play a role in the structure and function of the aminoacyl-tRNA binding site. In Cereibacter sphaeroides (strain ATCC 17029 / ATH 2.4.9) (Rhodobacter sphaeroides), this protein is Large ribosomal subunit protein bL19.